Reading from the N-terminus, the 367-residue chain is Histidinol-phosphate aminotransferase (367 aa).

Lys221 bears the N6-(pyridoxal phosphate)lysine mark.

The protein belongs to the class-II pyridoxal-phosphate-dependent aminotransferase family. Histidinol-phosphate aminotransferase subfamily. As to quaternary structure, homodimer. Pyridoxal 5'-phosphate serves as cofactor.

The catalysed reaction is L-histidinol phosphate + 2-oxoglutarate = 3-(imidazol-4-yl)-2-oxopropyl phosphate + L-glutamate. Its pathway is amino-acid biosynthesis; L-histidine biosynthesis; L-histidine from 5-phospho-alpha-D-ribose 1-diphosphate: step 7/9. This is Histidinol-phosphate aminotransferase from Paracoccus denitrificans (strain Pd 1222).